Here is a 218-residue protein sequence, read N- to C-terminus: Copper acquisition factor BIM1 (218 aa).

The first 19 residues, 1–19 (MFALKSILVTSLITSTALA), serve as a signal peptide directing secretion. Cu(2+) contacts are provided by H20 and H65. N-linked (GlcNAc...) asparagine glycosylation is found at N87, N91, and N124. Cu(2+) is bound at residue D138. N-linked (GlcNAc...) asparagine glycosylation is found at N158 and N170. Positions 160 to 194 (TCTNDASKASNATSTSSGSATATSAAATSSSSGTS) are disordered. A compositionally biased stretch (low complexity) spans 165 to 194 (ASKASNATSTSSGSATATSAAATSSSSGTS). The GPI-anchor amidated serine moiety is linked to residue S190. Positions 191–218 (SGTSGAIKEVVGFGALSLALGIAGLIIL) are cleaved as a propeptide — removed in mature form.

This sequence belongs to the X325 family. In terms of assembly, interacts with the CUF1-dependent copper transporter CTR1. The cofactor is Cu(2+).

It is found in the cell membrane. Lytic polysaccharide monooxygenase-like protein that has diverged to biological functions other than polysaccharide degradation since it does not perform oxidative cleavage of polysaccharides. Cell surface-bound protein that functions in the copper-accumulation pathway shared by the CUF1-dependent copper transporter CTR1. Involved in maintaining cell wall integrity during copper deficiency. Binds Cu(2+) with an estimated 1:1 stoichiometry and might serve as an extracellular copper ligand. FRE4 and FRE7 metalloreductases probably function together with CTR1 and BIM1 to liberate the Cu(2+) bound to the BIM1 copper-binding site for subsequent import of Cu(+) into the cell by CTR1, via the reduction of BIM1-bound Cu(2+) to Cu(+) to reduce binding affinity for BIM1 but increase affinity for CTR1. Facilitates copper acquisition in the brain of mammalian hosts and acts as a copper-dependent virulence trait in fungal meningitis. While BIM1 plays a critical role in cryptococcal meningitis, at least in part through its role in copper acquisition, it could play additional roles during copper limitation or as a means to invade and colonize host tissues in the brain, by compromising host carbohydrate integrity via its lytic polysaccharide monooxygenase (LPMO) activity, which has still to be determined. The polypeptide is Copper acquisition factor BIM1 (Cryptococcus neoformans var. grubii serotype A (strain H99 / ATCC 208821 / CBS 10515 / FGSC 9487) (Filobasidiella neoformans var. grubii)).